The chain runs to 192 residues: Holliday junction branch migration complex subunit RuvA (192 aa).

The tract at residues 1–61 is domain I; the sequence is MFEYLKGIVT…DTGITLYGFL (61 aa). Residues 62 to 137 are domain II; that stretch reads SLEDKELFLK…KLGDYVKKST (76 aa). The tract at residues 137–140 is flexible linker; it reads TAAA. Residues 141 to 192 are domain III; sequence DLTPSLQDALLALVALGYTQKEVDRITPKLAKLPENTADGYVKEALALLLKK.

Belongs to the RuvA family. In terms of assembly, homotetramer. Forms an RuvA(8)-RuvB(12)-Holliday junction (HJ) complex. HJ DNA is sandwiched between 2 RuvA tetramers; dsDNA enters through RuvA and exits via RuvB. An RuvB hexamer assembles on each DNA strand where it exits the tetramer. Each RuvB hexamer is contacted by two RuvA subunits (via domain III) on 2 adjacent RuvB subunits; this complex drives branch migration. In the full resolvosome a probable DNA-RuvA(4)-RuvB(12)-RuvC(2) complex forms which resolves the HJ.

It localises to the cytoplasm. Functionally, the RuvA-RuvB-RuvC complex processes Holliday junction (HJ) DNA during genetic recombination and DNA repair, while the RuvA-RuvB complex plays an important role in the rescue of blocked DNA replication forks via replication fork reversal (RFR). RuvA specifically binds to HJ cruciform DNA, conferring on it an open structure. The RuvB hexamer acts as an ATP-dependent pump, pulling dsDNA into and through the RuvAB complex. HJ branch migration allows RuvC to scan DNA until it finds its consensus sequence, where it cleaves and resolves the cruciform DNA. This Lactobacillus johnsonii (strain CNCM I-12250 / La1 / NCC 533) protein is Holliday junction branch migration complex subunit RuvA.